Here is a 308-residue protein sequence, read N- to C-terminus: uncharacterized protein (308 aa).

Glu59 is a catalytic residue.

This sequence belongs to the PhzF family.

This is an uncharacterized protein from Deinococcus radiodurans (strain ATCC 13939 / DSM 20539 / JCM 16871 / CCUG 27074 / LMG 4051 / NBRC 15346 / NCIMB 9279 / VKM B-1422 / R1).